Consider the following 164-residue polypeptide: Pyruvoyl-dependent arginine decarboxylase (164 aa).

Ser-52 is subject to Pyruvic acid (Ser).

This sequence belongs to the PdaD family. It depends on pyruvate as a cofactor.

The enzyme catalyses L-arginine + H(+) = agmatine + CO2. This Methanococcus maripaludis (strain C5 / ATCC BAA-1333) protein is Pyruvoyl-dependent arginine decarboxylase.